The sequence spans 90 residues: Acylphosphatase (90 aa).

One can recognise an Acylphosphatase-like domain in the interval 4 to 90 (TRRVRFYGRV…TEFQDFQIKR (87 aa)). Active-site residues include R19 and N37.

This sequence belongs to the acylphosphatase family.

The enzyme catalyses an acyl phosphate + H2O = a carboxylate + phosphate + H(+). In Thermoplasma volcanium (strain ATCC 51530 / DSM 4299 / JCM 9571 / NBRC 15438 / GSS1), this protein is Acylphosphatase (acyP).